Consider the following 281-residue polypeptide: Urease accessory protein UreD 2 (281 aa).

It belongs to the UreD family. In terms of assembly, ureD, UreF and UreG form a complex that acts as a GTP-hydrolysis-dependent molecular chaperone, activating the urease apoprotein by helping to assemble the nickel containing metallocenter of UreC. The UreE protein probably delivers the nickel.

Its subcellular location is the cytoplasm. Its function is as follows. Required for maturation of urease via the functional incorporation of the urease nickel metallocenter. This is Urease accessory protein UreD 2 from Pseudomonas syringae pv. syringae (strain B728a).